The sequence spans 207 residues: MSNKVQMDNDFMQMQKPFALFAKWLEEATVSEINDPNAMALATVDETGLPNVRMVLLKDFSSRGFVFYTNYESCKGQEILKSMKASLVFHWKSLRRQIRIRGIVEKVSTQEADVYFQSRPRGSRIGAWASKQSQPLENRFVLEKAIAQYTARYAVGNIPRPPYWSGFRVKPLSIEFWCDRPFRLHDRLLFTRDSVEQVDWQRQKLYP.

FMN-binding positions include 53–58 (RMVLLK), 68–69 (YT), lysine 75, and glutamine 97. Lysine 58 contacts substrate. Substrate-binding residues include tyrosine 115, arginine 119, and serine 123. FMN-binding positions include 132–133 (QS) and tryptophan 177. 183–185 (RLH) serves as a coordination point for substrate. Arginine 187 lines the FMN pocket.

Belongs to the pyridoxamine 5'-phosphate oxidase family. In terms of assembly, homodimer. FMN serves as cofactor.

It catalyses the reaction pyridoxamine 5'-phosphate + O2 + H2O = pyridoxal 5'-phosphate + H2O2 + NH4(+). It carries out the reaction pyridoxine 5'-phosphate + O2 = pyridoxal 5'-phosphate + H2O2. The protein operates within cofactor metabolism; pyridoxal 5'-phosphate salvage; pyridoxal 5'-phosphate from pyridoxamine 5'-phosphate: step 1/1. It functions in the pathway cofactor metabolism; pyridoxal 5'-phosphate salvage; pyridoxal 5'-phosphate from pyridoxine 5'-phosphate: step 1/1. Catalyzes the oxidation of either pyridoxine 5'-phosphate (PNP) or pyridoxamine 5'-phosphate (PMP) into pyridoxal 5'-phosphate (PLP). This is Pyridoxine/pyridoxamine 5'-phosphate oxidase from Bartonella quintana (strain Toulouse) (Rochalimaea quintana).